Reading from the N-terminus, the 314-residue chain is Acetyl-coenzyme A carboxylase carboxyl transferase subunit beta (314 aa).

The 271-residue stretch at 37–307 folds into the CoA carboxyltransferase N-terminal domain; that stretch reads LWQKCPACDA…MSLPALEPTY (271 aa). Residues cysteine 41, cysteine 44, cysteine 60, and cysteine 63 each contribute to the Zn(2+) site. The segment at 41-63 adopts a C4-type zinc-finger fold; it reads CPACDALTYTKDLQQNWQVCPSC.

The protein belongs to the AccD/PCCB family. As to quaternary structure, acetyl-CoA carboxylase is a heterohexamer composed of biotin carboxyl carrier protein (AccB), biotin carboxylase (AccC) and two subunits each of ACCase subunit alpha (AccA) and ACCase subunit beta (AccD). Requires Zn(2+) as cofactor.

Its subcellular location is the cytoplasm. The enzyme catalyses N(6)-carboxybiotinyl-L-lysyl-[protein] + acetyl-CoA = N(6)-biotinyl-L-lysyl-[protein] + malonyl-CoA. It participates in lipid metabolism; malonyl-CoA biosynthesis; malonyl-CoA from acetyl-CoA: step 1/1. Component of the acetyl coenzyme A carboxylase (ACC) complex. Biotin carboxylase (BC) catalyzes the carboxylation of biotin on its carrier protein (BCCP) and then the CO(2) group is transferred by the transcarboxylase to acetyl-CoA to form malonyl-CoA. The polypeptide is Acetyl-coenzyme A carboxylase carboxyl transferase subunit beta (Synechococcus sp. (strain JA-3-3Ab) (Cyanobacteria bacterium Yellowstone A-Prime)).